Consider the following 374-residue polypeptide: Putative serine/threonine-protein kinase ZK507.3 (374 aa).

The region spanning 25-296 (WKVIVELGKG…CKLTLKEPLV (272 aa)) is the Protein kinase domain. ATP is bound by residues 31–39 (LGKGGYGTV) and Lys60. Asp158 (proton acceptor) is an active-site residue. Residues 302–374 (NDNESGSTPT…KTRNKKPSRK (73 aa)) are disordered. Positions 306 to 324 (SGSTPTTSATACSPSSSTG) are enriched in low complexity. Residues 334–343 (IASNIDQKSI) show a composition bias toward polar residues. A compositionally biased stretch (basic residues) spans 364–374 (TKTRNKKPSRK).

Belongs to the protein kinase superfamily. Ser/Thr protein kinase family.

The catalysed reaction is L-seryl-[protein] + ATP = O-phospho-L-seryl-[protein] + ADP + H(+). The enzyme catalyses L-threonyl-[protein] + ATP = O-phospho-L-threonyl-[protein] + ADP + H(+). This chain is Putative serine/threonine-protein kinase ZK507.3, found in Caenorhabditis elegans.